The chain runs to 221 residues: Protein GrpE (221 aa).

The tract at residues 1 to 43 (MFTNPFGRKKDMSDDQKKNNQPDTEADNAENIKFAADDTELRA) is disordered. Over residues 8-20 (RKKDMSDDQKKNN) the composition is skewed to basic and acidic residues.

It belongs to the GrpE family. As to quaternary structure, homodimer.

The protein resides in the cytoplasm. In terms of biological role, participates actively in the response to hyperosmotic and heat shock by preventing the aggregation of stress-denatured proteins, in association with DnaK and GrpE. It is the nucleotide exchange factor for DnaK and may function as a thermosensor. Unfolded proteins bind initially to DnaJ; upon interaction with the DnaJ-bound protein, DnaK hydrolyzes its bound ATP, resulting in the formation of a stable complex. GrpE releases ADP from DnaK; ATP binding to DnaK triggers the release of the substrate protein, thus completing the reaction cycle. Several rounds of ATP-dependent interactions between DnaJ, DnaK and GrpE are required for fully efficient folding. The polypeptide is Protein GrpE (Deinococcus radiodurans (strain ATCC 13939 / DSM 20539 / JCM 16871 / CCUG 27074 / LMG 4051 / NBRC 15346 / NCIMB 9279 / VKM B-1422 / R1)).